The chain runs to 199 residues: dITP/XTP pyrophosphatase (199 aa).

Substrate is bound at residue T8–K13. Residue D68 is the Proton acceptor of the active site. D68 is a Mg(2+) binding site. Residues S69, H151–D154, K174, and H179–R180 each bind substrate.

It belongs to the HAM1 NTPase family. In terms of assembly, homodimer. Mg(2+) is required as a cofactor.

The catalysed reaction is XTP + H2O = XMP + diphosphate + H(+). The enzyme catalyses dITP + H2O = dIMP + diphosphate + H(+). It carries out the reaction ITP + H2O = IMP + diphosphate + H(+). Its function is as follows. Pyrophosphatase that catalyzes the hydrolysis of nucleoside triphosphates to their monophosphate derivatives, with a high preference for the non-canonical purine nucleotides XTP (xanthosine triphosphate), dITP (deoxyinosine triphosphate) and ITP. Seems to function as a house-cleaning enzyme that removes non-canonical purine nucleotides from the nucleotide pool, thus preventing their incorporation into DNA/RNA and avoiding chromosomal lesions. This chain is dITP/XTP pyrophosphatase, found in Leifsonia xyli subsp. xyli (strain CTCB07).